The primary structure comprises 494 residues: UPF0371 protein STER_1332 (494 aa).

Belongs to the UPF0371 family.

The sequence is that of UPF0371 protein STER_1332 from Streptococcus thermophilus (strain ATCC BAA-491 / LMD-9).